The following is a 164-amino-acid chain: UPF0305 protein MJ0646 (164 aa).

This sequence belongs to the UPF0305 family.

This chain is UPF0305 protein MJ0646, found in Methanocaldococcus jannaschii (strain ATCC 43067 / DSM 2661 / JAL-1 / JCM 10045 / NBRC 100440) (Methanococcus jannaschii).